A 433-amino-acid chain; its full sequence is Trigger factor (433 aa).

Residues 161–246 (GDRVTMDFVG…AKKVEARDLP (86 aa)) form the PPIase FKBP-type domain.

This sequence belongs to the FKBP-type PPIase family. Tig subfamily.

It localises to the cytoplasm. It carries out the reaction [protein]-peptidylproline (omega=180) = [protein]-peptidylproline (omega=0). Functionally, involved in protein export. Acts as a chaperone by maintaining the newly synthesized protein in an open conformation. Functions as a peptidyl-prolyl cis-trans isomerase. This is Trigger factor from Idiomarina loihiensis (strain ATCC BAA-735 / DSM 15497 / L2-TR).